An 876-amino-acid chain; its full sequence is MKSSEIRSAFLKYFQRNGHEVVASSSLVPADDPTLLFTNAGMNQFKDVFLGKDKRNYDRATTSQKCVRAGGKHNDLENVGYTARHHTFFEMLGNFSFGDYFKREAINYAWEFLTSSDWLNIDKSKLTVTVYASDDESFDIWANEIGVPEERIIRIGDNKGAPYASDNFWQMGDTGPCGPCTEIFYDHGPHIAGGPPGSPDEDGDRFIEIWNVVFMQFNRTADGEMHPLPKPSVDTGMGLERISALMQGVHSNYEIDLFQELLAEASKVLGGASIEEPALRVIADHIRSSSFLIADGVLPENIGRGSVLRRIIRRAARYGNKVGATEPFLHKLVGKLVELMGDAYPELKASQNKIEKTLLLEEEQFAKTLDKGLKLLEHELEQLKGMTIPGKTIFTLYDTYGFPVELTNDIARERSLAMDMDGYEVEMEAQRKRAREAGSFGVDYNAGLNIDVSSEFTGYTELAGSYKALALFAGSDKADALTVGQQGLVVLDKTPFYAESGGQVGDTGVLKTDTGVFVVKDTKKEGAAIVHIGAVSEGEIKVGQTVTAEVDRHKRKATALNHSATHLLHAALRKVLGDHVAQKGSLVDPERLRFDFAHFEPMTQEQIRQVESIVNAQIRANTSVSTEVMGMDAARERGAMALFGEKYGDTVRVLAMGESDFSIELCGGTHVERTGDIGMFVIASEAGTAAGVRRIEALTGQPAENWVQSSDALLRDIAVLVKGNRETAADKVRALIERSRQLEKEVDQVKAKLASSAGSDLAASAVDVKGLKVLAAKLDGVDRKALMDTVDQLKNKLGQAVVLLASVEDGKASIVAGVTKAESAKVKAGDLVKMVAEQLGGKGGGRPDMAQGGGVELGKLDAALASVNAWVEGQLG.

Zn(2+) contacts are provided by H562, H566, C666, and H670.

This sequence belongs to the class-II aminoacyl-tRNA synthetase family. It depends on Zn(2+) as a cofactor.

It is found in the cytoplasm. It catalyses the reaction tRNA(Ala) + L-alanine + ATP = L-alanyl-tRNA(Ala) + AMP + diphosphate. Catalyzes the attachment of alanine to tRNA(Ala) in a two-step reaction: alanine is first activated by ATP to form Ala-AMP and then transferred to the acceptor end of tRNA(Ala). Also edits incorrectly charged Ser-tRNA(Ala) and Gly-tRNA(Ala) via its editing domain. This Hahella chejuensis (strain KCTC 2396) protein is Alanine--tRNA ligase.